The following is an 891-amino-acid chain: MKLYTHKINRIVDGYLDNLNKFGLNYMFEQDLIKITLDLGIPNNNIKFYNLNNSNSNSNNNNNNNNNNNNNNNNNNNNNNNNNNNNSNNSNNINNKNDILYNIIIEEKIDLIIFYKSIFSENANNISKTFNNLTTIIINDNIISNTNNNNNNNNKFYEINYPFKISTLLSGYISGLISETNIIGYLKTNKIQDQTLLDTFYFGARLSNPMVKLMFYTIDYDFKNASNNNFPFQEIIELSVSSLLKNGVDLISSSFENNEYLTFCNILLKQNIKIIGSNGFLISPPLNKDHVLFNSVYNLTLYILPIISNLINNTNTNNNNNTNNNESTNSQFNINLIFNPSISNLIINNINSNLSMIENQILNDTNIILTNQLNNESIIDLGIISGYILFKPISKTIEYGITIVSSILIGALIIIQICIIKYKNKPSFKSASPTFLIFIVIGGIFVYIGVIIWVSGVNVFTCNAKFWLISLGLTTMIGGIVVKNFRIWLIFDNPKLYHIKITNLQLLPWVLGMFLLNVFLLSLITGLGKLTPFKVFPNDEKFSSYEIQCEMMDGGLIALYFLLGYFAIIVMIGIFVSWKIRIVDIEEFNESKSVAYSLYSIVFCLLIIAPLTISKTGHNTEILCSGFIFIVAAIITIMFIPKFWALKIYGAEGSNEIFRQSSSSTSKRKNKSSTTNDPTNLDSISKKSSKNAPKRVNLFLYDFTDDDEESKQSSSSSKGDTIECMDVFTFIESVQPNSEAANEMTYNDDPTYTEPSEQPTYTESSEQPNPTPRTLTATPRTNDLTTPRTNDLTTPRTNDLITPRTNDLSTPRTNDLNTPRTDGILTPRSINSLATPRVEEPMSPRQYHNMMITLSPILEEENIVVVEKDEVIENSDSESESSDSNSDSIIQ.

Residues 1 to 399 (MKLYTHKINR…FKPISKTIEY (399 aa)) lie on the Extracellular side of the membrane. 13 N-linked (GlcNAc...) asparagine glycosylation sites follow: Asn52, Asn85, Asn88, Asn125, Asn132, Asn224, Asn298, Asn312, Asn320, Asn325, Asn353, Asn363, and Asn375. A disordered region spans residues 52-91 (NNSNSNSNNNNNNNNNNNNNNNNNNNNNNNNNNNNSNNSN). Residues 400-420 (GITIVSSILIGALIIIQICII) form a helical membrane-spanning segment. Over 421–433 (KYKNKPSFKSASP) the chain is Cytoplasmic. Residues 434–454 (TFLIFIVIGGIFVYIGVIIWV) traverse the membrane as a helical segment. The Extracellular segment spans residues 455–461 (SGVNVFT). The helical transmembrane segment at 462-482 (CNAKFWLISLGLTTMIGGIVV) threads the bilayer. Residues 483–505 (KNFRIWLIFDNPKLYHIKITNLQ) lie on the Cytoplasmic side of the membrane. Residues 506–526 (LLPWVLGMFLLNVFLLSLITG) form a helical membrane-spanning segment. Residues 527 to 555 (LGKLTPFKVFPNDEKFSSYEIQCEMMDGG) are Extracellular-facing. Residues 556–576 (LIALYFLLGYFAIIVMIGIFV) form a helical membrane-spanning segment. Over 577 to 592 (SWKIRIVDIEEFNESK) the chain is Cytoplasmic. A helical transmembrane segment spans residues 593 to 613 (SVAYSLYSIVFCLLIIAPLTI). At 614-625 (SKTGHNTEILCS) the chain is on the extracellular side. A helical membrane pass occupies residues 626–646 (GFIFIVAAIITIMFIPKFWAL). Over 647–891 (KIYGAEGSNE…SDSNSDSIIQ (245 aa)) the chain is Cytoplasmic. Disordered stretches follow at residues 660–689 (QSSS…KKSS), 742–827 (NEMT…ILTP), and 869–891 (DEVI…SIIQ). The span at 742–767 (NEMTYNDDPTYTEPSEQPTYTESSEQ) shows a compositional bias: polar residues. Low complexity predominate over residues 772-782 (PRTLTATPRTN). Residues 783–820 (DLTTPRTNDLTTPRTNDLITPRTNDLSTPRTNDLNTPR) show a composition bias toward polar residues. Positions 872-881 (IENSDSESES) are enriched in acidic residues. Low complexity predominate over residues 882 to 891 (SDSNSDSIIQ).

Belongs to the G-protein coupled receptor 3 family. GABA-B receptor subfamily.

Its subcellular location is the membrane. The chain is Metabotropic glutamate receptor-like protein N (grlN) from Dictyostelium discoideum (Social amoeba).